A 201-amino-acid chain; its full sequence is 3-isopropylmalate dehydratase small subunit (201 aa).

Belongs to the LeuD family. LeuD type 1 subfamily. Heterodimer of LeuC and LeuD.

The enzyme catalyses (2R,3S)-3-isopropylmalate = (2S)-2-isopropylmalate. It participates in amino-acid biosynthesis; L-leucine biosynthesis; L-leucine from 3-methyl-2-oxobutanoate: step 2/4. Catalyzes the isomerization between 2-isopropylmalate and 3-isopropylmalate, via the formation of 2-isopropylmaleate. In Shewanella frigidimarina (strain NCIMB 400), this protein is 3-isopropylmalate dehydratase small subunit.